A 271-amino-acid chain; its full sequence is Putative pyrimidine-specific ribonucleoside hydrolase RihB (271 aa).

2 residues coordinate substrate: Q185 and H197.

The protein belongs to the IUNH family. RihB subfamily.

It catalyses the reaction a pyrimidine ribonucleoside + H2O = a pyrimidine nucleobase + D-ribose. This is Putative pyrimidine-specific ribonucleoside hydrolase RihB (rihB) from Shigella dysenteriae serotype 1 (strain Sd197).